Reading from the N-terminus, the 539-residue chain is Phenylacetyl-CoA ligase epaB (539 aa).

188-199 (RLFSSGTTGLPK) contacts AMP. Positions 449–525 (EVEGVLRNHP…DAIPRNASGK (77 aa)) are AMP-binding.

The protein belongs to the ATP-dependent AMP-binding enzyme family.

Its pathway is secondary metabolite biosynthesis. Its function is as follows. Phenylacetyl-CoA ligase; part of the gene cluster that mediates the biosynthesis of nigerpyrone and its derivatives carbonarone A and pestalamide A. The biosynthesis pathway begins with the polyketide assembly by epaA to form phenylacetyl triketide precursor from successive condensation of two malonyl-CoA, presumably with one phenylacetyl-CoA starter unit produced by the phenylacetyl-CoA ligase epaB. For the nigerpyrone biosynthesis, the reactive polyketide chain is released as an aldehyde through the R-domain. A nonenzymatic cyclization and dehydration may create nigerpyrone. For the biosynthesis of carbonarone A and pestalamide A, an extra methyl group is added through the C-methyltransferase domain. Several further steps involving the dehydrogenase orf1, the cytochrome P450 monooxygenase orf2 and the FAD-dependent monooxygenase orf3 are required to form a carbonarone A precursor which is converted to carbonarone A via cyclization. The O-acetyltransferase epaC could catalyze the transfer of 2-methylsuccinyl-CoA, a common intermediate in the ethylmalonyl-CoA pathway, to generate the final product pestalamide A. This Aspergillus niger (strain ATCC MYA-4892 / CBS 513.88 / FGSC A1513) protein is Phenylacetyl-CoA ligase epaB.